An 88-amino-acid polypeptide reads, in one-letter code: Elongation factor 1-beta (88 aa).

It belongs to the EF-1-beta/EF-1-delta family.

Its function is as follows. Promotes the exchange of GDP for GTP in EF-1-alpha/GDP, thus allowing the regeneration of EF-1-alpha/GTP that could then be used to form the ternary complex EF-1-alpha/GTP/AAtRNA. The protein is Elongation factor 1-beta of Halorubrum lacusprofundi (strain ATCC 49239 / DSM 5036 / JCM 8891 / ACAM 34).